The following is a 131-amino-acid chain: Small ribosomal subunit protein uS8 (131 aa).

Belongs to the universal ribosomal protein uS8 family. In terms of assembly, part of the 30S ribosomal subunit. Contacts proteins S5 and S12.

Its function is as follows. One of the primary rRNA binding proteins, it binds directly to 16S rRNA central domain where it helps coordinate assembly of the platform of the 30S subunit. This Verminephrobacter eiseniae (strain EF01-2) protein is Small ribosomal subunit protein uS8.